A 375-amino-acid polypeptide reads, in one-letter code: tRNA-specific 2-thiouridylase MnmA (375 aa).

ATP-binding positions include 8 to 15 and M34; that span reads GLSGGVDS. The interaction with target base in tRNA stretch occupies residues 104–106; sequence NPD. The active-site Nucleophile is C109. A disulfide bridge connects residues C109 and C205. Residue G133 participates in ATP binding. An interaction with tRNA region spans residues 155-157; it reads KDQ. Catalysis depends on C205, which acts as the Cysteine persulfide intermediate. Positions 313 to 314 are interaction with tRNA; that stretch reads RY.

Belongs to the MnmA/TRMU family.

The protein localises to the cytoplasm. It catalyses the reaction S-sulfanyl-L-cysteinyl-[protein] + uridine(34) in tRNA + AH2 + ATP = 2-thiouridine(34) in tRNA + L-cysteinyl-[protein] + A + AMP + diphosphate + H(+). Catalyzes the 2-thiolation of uridine at the wobble position (U34) of tRNA, leading to the formation of s(2)U34. The protein is tRNA-specific 2-thiouridylase MnmA of Acholeplasma laidlawii (strain PG-8A).